Consider the following 355-residue polypeptide: Peptide chain release factor 1 (355 aa).

An N5-methylglutamine modification is found at glutamine 230.

The protein belongs to the prokaryotic/mitochondrial release factor family. Post-translationally, methylated by PrmC. Methylation increases the termination efficiency of RF1.

Its subcellular location is the cytoplasm. In terms of biological role, peptide chain release factor 1 directs the termination of translation in response to the peptide chain termination codons UAG and UAA. The polypeptide is Peptide chain release factor 1 (Geobacter sulfurreducens (strain ATCC 51573 / DSM 12127 / PCA)).